The following is a 472-amino-acid chain: Transcriptional activator protein rec16 (472 aa).

The C2H2-type zinc-finger motif lies at 420–444 (FICCYCTKPFLSISKLQEHESSCSH).

It is found in the nucleus. In terms of biological role, transcriptional activator that controls the onset of premeiotic DNA synthesis by regulating res2 and some other factor(s) in a mei2 independent cascade. The chain is Transcriptional activator protein rec16 (rec16) from Schizosaccharomyces pombe (strain 972 / ATCC 24843) (Fission yeast).